The following is a 421-amino-acid chain: UDP-N-acetylglucosamine 1-carboxyvinyltransferase (421 aa).

22-23 serves as a coordination point for phosphoenolpyruvate; it reads KN. Arg-93 contacts UDP-N-acetyl-alpha-D-glucosamine. Catalysis depends on Cys-117, which acts as the Proton donor. Position 117 is a 2-(S-cysteinyl)pyruvic acid O-phosphothioketal (Cys-117). UDP-N-acetyl-alpha-D-glucosamine is bound by residues 122 to 126, Asp-308, and Ile-330; that span reads RPVDL.

The protein belongs to the EPSP synthase family. MurA subfamily.

The protein resides in the cytoplasm. The enzyme catalyses phosphoenolpyruvate + UDP-N-acetyl-alpha-D-glucosamine = UDP-N-acetyl-3-O-(1-carboxyvinyl)-alpha-D-glucosamine + phosphate. It participates in cell wall biogenesis; peptidoglycan biosynthesis. Its function is as follows. Cell wall formation. Adds enolpyruvyl to UDP-N-acetylglucosamine. The protein is UDP-N-acetylglucosamine 1-carboxyvinyltransferase of Pseudomonas fluorescens (strain Pf0-1).